We begin with the raw amino-acid sequence, 404 residues long: Tryptophan synthase beta chain (404 aa).

Lys-98 carries the N6-(pyridoxal phosphate)lysine modification.

This sequence belongs to the TrpB family. Tetramer of two alpha and two beta chains. It depends on pyridoxal 5'-phosphate as a cofactor.

The enzyme catalyses (1S,2R)-1-C-(indol-3-yl)glycerol 3-phosphate + L-serine = D-glyceraldehyde 3-phosphate + L-tryptophan + H2O. Its pathway is amino-acid biosynthesis; L-tryptophan biosynthesis; L-tryptophan from chorismate: step 5/5. Functionally, the beta subunit is responsible for the synthesis of L-tryptophan from indole and L-serine. The sequence is that of Tryptophan synthase beta chain from Rhodopseudomonas palustris (strain BisA53).